The sequence spans 253 residues: Ribosomal RNA small subunit methyltransferase A (253 aa).

Positions 12, 14, 39, 60, 81, and 104 each coordinate S-adenosyl-L-methionine.

This sequence belongs to the class I-like SAM-binding methyltransferase superfamily. rRNA adenine N(6)-methyltransferase family. RsmA subfamily.

Its subcellular location is the cytoplasm. The enzyme catalyses adenosine(1518)/adenosine(1519) in 16S rRNA + 4 S-adenosyl-L-methionine = N(6)-dimethyladenosine(1518)/N(6)-dimethyladenosine(1519) in 16S rRNA + 4 S-adenosyl-L-homocysteine + 4 H(+). Functionally, specifically dimethylates two adjacent adenosines (A1518 and A1519) in the loop of a conserved hairpin near the 3'-end of 16S rRNA in the 30S particle. May play a critical role in biogenesis of 30S subunits. This chain is Ribosomal RNA small subunit methyltransferase A, found in Acidovorax ebreus (strain TPSY) (Diaphorobacter sp. (strain TPSY)).